Reading from the N-terminus, the 316-residue chain is MSDGNTAAAWVPTGSVTVRVPGKVNLYLAVGDRREDGYHELTTIFQAVSLLDEVTVRNADVLSLDIVGEGADKLPTDERNLAWQAAELMADHVGRAPDVSIMIDKSIPVAGGMAGGSADAAAVLVAMNSLWELNVPRRDLRMLAARLGSDVPFALHGGTALGTGRGEELATVLSRNTFHWVLAFADGELLTRKVFAELDRLRRAGDPPRLPGPGPVLAALAAGDADQLAPLLGNEMQAAAVSLNPGLRRTLRAGVQAGALAGIVSGSGPTCAFLCPSAAAAVDVGTEVSGVGVCRTVRVASGPVAGARVVPAPTEV.

Lys23 is an active-site residue. 108-118 is an ATP binding site; it reads PVAGGMAGGSA. The active site involves Asp150.

The protein belongs to the GHMP kinase family. IspE subfamily.

The catalysed reaction is 4-CDP-2-C-methyl-D-erythritol + ATP = 4-CDP-2-C-methyl-D-erythritol 2-phosphate + ADP + H(+). It functions in the pathway isoprenoid biosynthesis; isopentenyl diphosphate biosynthesis via DXP pathway; isopentenyl diphosphate from 1-deoxy-D-xylulose 5-phosphate: step 3/6. Its function is as follows. Catalyzes the phosphorylation of the position 2 hydroxy group of 4-diphosphocytidyl-2C-methyl-D-erythritol. The chain is 4-diphosphocytidyl-2-C-methyl-D-erythritol kinase from Mycolicibacterium paratuberculosis (strain ATCC BAA-968 / K-10) (Mycobacterium paratuberculosis).